A 1513-amino-acid polypeptide reads, in one-letter code: Mucin-2 (1513 aa).

A signal peptide spans 1-20 (MGLPLARLVAVCLVLALAKG). The VWFD 1 domain maps to 32–204 (HVCSTWGDFH…KINKPEVVCE (173 aa)). Intrachain disulfides connect Cys-34/Cys-166, Cys-56/Cys-203, Cys-64/Cys-163, Cys-215/Cys-252, Cys-222/Cys-247, Cys-234/Cys-272, Cys-254/Cys-260, Cys-262/Cys-288, Cys-292/Cys-326, Cys-309/Cys-348, Cys-328/Cys-342, Cys-350/Cys-372, Cys-367/Cys-384, Cys-370/Cys-379, Cys-388/Cys-525, Cys-410/Cys-560, Cys-432/Cys-440, Cys-571/Cys-616, Cys-585/Cys-611, Cys-598/Cys-636, Cys-618/Cys-624, Cys-626/Cys-651, Cys-658/Cys-695, Cys-671/Cys-685, Cys-675/Cys-715, Cys-697/Cys-709, Cys-717/Cys-739, and Cys-737/Cys-746. Asp-46 lines the Ca(2+) pocket. The Cu(+) site is built by Met-143 and Met-151. Glu-153 contributes to the Cu(2+) binding site. N-linked (GlcNAc...) asparagine glycosylation occurs at Asn-160. Ca(2+) contacts are provided by Asp-168, Asn-170, and Glu-177. 2 residues coordinate Cu(2+): His-274 and His-321. The 57-residue stretch at 292 to 348 (CPGNMVYLESGSPWLDTCSHLEVSSLCEEHYMDGCFCPEGTVYDDITGSGCIPVSQC) folds into the TIL domain. Position 323 (Met-323) interacts with Cu(+). In terms of domain architecture, VWFC spans 350–410 (CKLHGHLYMP…GKKFTFHGDC (61 aa)). The region spanning 386–561 (ETCALEGGSH…NTWKAQSSCH (176 aa)) is the VWFD 2 domain. Asp-400 is a Ca(2+) binding site. A glycan (N-linked (GlcNAc...) asparagine) is linked at Asn-420. 5 residues coordinate Ca(2+): Asn-527, Asn-529, Leu-531, Asp-534, and Asp-535. N-linked (GlcNAc...) asparagine glycosylation occurs at Asn-667. Asn-767 is a glycosylation site (N-linked (GlcNAc...) asparagine). Disulfide bonds link Cys-781–Cys-817, Cys-799–Cys-811, Cys-819–Cys-842, Cys-836–Cys-854, Cys-840–Cys-849, Cys-858–Cys-989, Cys-880–Cys-1024, Cys-889–Cys-986, Cys-906–Cys-913, Cys-1034–Cys-1077, Cys-1048–Cys-1072, Cys-1059–Cys-1099, Cys-1079–Cys-1087, Cys-1089–Cys-1114, Cys-1105–Cys-1134, Cys-1118–Cys-1160, Cys-1142–Cys-1184, Cys-1164–Cys-1178, Cys-1186–Cys-1210, Cys-1205–Cys-1235, and Cys-1208–Cys-1218. Asn-837 carries N-linked (GlcNAc...) asparagine glycosylation. A VWFD 3 domain is found at 856–1025 (STCSIYGSGH…NSWKEASTCP (170 aa)). Position 870 (Asp-870) interacts with Ca(2+). Residue Asn-892 is glycosylated (N-linked (GlcNAc...) asparagine). Residues Asn-991, Asp-993, Asn-998, and Asp-999 each contribute to the Ca(2+) site. 2 N-linked (GlcNAc...) asparagine glycosylation sites follow: Asn-1136 and Asn-1151. N-linked (GlcNAc...) asparagine glycosylation is found at Asn-1212, Asn-1227, and Asn-1243. O-linked (GalNAc) threonine glycosylation is found at Thr-1264, Thr-1267, Thr-1268, and Thr-1280. The O-linked (GalNAc) serine glycan is linked to Ser-1286. A glycan (O-linked (GalNAc) threonine) is linked at Thr-1290. Ca(2+) is bound by residues Asn-1303, His-1306, Ser-1309, Gly-1313, Asp-1314, and Glu-1316. A glycan (N-linked (GlcNAc...) asparagine) is linked at Asn-1350. Ca(2+) contacts are provided by Asp-1373 and Tyr-1374. 11 consecutive repeat copies span residues 1392 to 1407 (SPTT…QPTS), 1408 to 1423 (SPTT…SSAT), 1424 to 1434 (SPTTSHITSTV), 1435 to 1445 (SPTTSPTTSTT), 1446 to 1456 (SPTTSPTTSTT), 1457 to 1467 (SPTTSTTSPTP), 1468 to 1478 (SPTTSTTSPTP), 1479 to 1489 (SPTTSTTSPTP), 1490 to 1500 (SPTTSTTSPTT), 1501 to 1511 (SPITSPTTSTT), and 1512 to 1513 (SP). Residues 1392–1513 (SPTTSTPISS…TSPTTSTTSP (122 aa)) are approximate repeats. Positions 1392–1513 (SPTTSTPISS…TSPTTSTTSP (122 aa)) are disordered.

Homomultimer; disulfide-linked. The N- and C-terminus mediate their assembly into higher order structures to form filaments. The CTCK domains of two polypeptides associate in the endoplasmic reticulum to generate intermolecularly disulfide-bonded dimers. These dimers progress to the Golgi apparatus, which is a more acidic environment than the endoplasmic reticulum. Under acidic conditions, the N-termini form non-covalent intermolecular interactions that juxtapose assemblies of the third VWD domain (VWD3) from different CTCK-linked dimers. The VWD3 assemblies then become disulfide bonded to one another to produce long, disulfide-linked polymers that remain highly compact until secretion. Interacts with FCGBP. Interacts with AGR2; disulfide-linked. Post-translationally, O-glycosylated. O-glycosylation is required for mucin assembly. Goblet cells synthesize two forms of mucin that differ in branched chain O-glycosylation and the site of production in the colon. In terms of processing, may undergo proteolytic cleavage in the outer mucus layer of the colon, contributing to the expanded volume and loose nature of this layer which allows for bacterial colonization in contrast to the inner mucus layer which is dense and devoid of bacteria. At low pH of 6 and under, undergoes autocatalytic cleavage in vitro in the N-terminal region of the fourth VWD domain. It is likely that this also occurs in vivo and is triggered by the low pH of the late secretory pathway. Expressed in intestine and airway.

The protein resides in the secreted. Functionally, coats the epithelia of the intestines and other mucus membrane-containing organs to provide a protective, lubricating barrier against particles and infectious agents at mucosal surfaces. Major constituent of the colon mucus, which is mainly formed by large polymeric networks of MUC2 secreted by goblet cells that cover the exposed surfaces of intestine. MUC2 networks form hydrogels that guard the underlying epithelium from pathogens and other hazardous matter entering from the outside world, while permitting nutrient absorption and gas exchange. Acts as a divalent copper chaperone that protects intestinal cells from copper toxicity and facilitates nutritional copper unptake into cells. Binds both Cu(2+) and its reduced form, Cu(1+), at two juxtaposed binding sites: Cu(2+), once reduced to Cu(1+) by vitamin C (ascorbate) or other dietary antioxidants, transits to the other binding site. MUC2-bound Cu(1+) is protected from oxidation in aerobic environments, and can be released for nutritional delivery to cells. Mucin gels store antimicrobial molecules that participate in innate immunity. Mucin glycoproteins also house and feed the microbiome, lubricate tissue surfaces, and may facilitate the removal of contaminants and waste products from the body. Goblet cells synthesize two forms of MUC2 mucin that differ in branched chain O-glycosylation and the site of production in the colon: a (1) 'thick' mucus that wraps the microbiota to form fecal pellets is produced in the proximal, ascending colon. 'Thick' mucus transits along the descending colon and is lubricated by a (2) 'thin' MUC2 mucus produced in the distal colon which adheres to the 'thick' mucus. This Rattus norvegicus (Rat) protein is Mucin-2.